The sequence spans 1076 residues: Carbamoyl phosphate synthase large chain (1076 aa).

Residues Met-1 to Glu-403 are carboxyphosphate synthetic domain. 12 residues coordinate ATP: Arg-129, Arg-169, Gly-175, Gly-176, Glu-208, Leu-210, Glu-215, Gly-241, Val-242, His-243, Gln-285, and Glu-299. Residues Asp-133 to Val-328 form the ATP-grasp 1 domain. Mg(2+) contacts are provided by Gln-285, Glu-299, and Asn-301. Mn(2+)-binding residues include Gln-285, Glu-299, and Asn-301. The interval Thr-404–Ala-553 is oligomerization domain. The carbamoyl phosphate synthetic domain stretch occupies residues Glu-554 to Gly-935. Residues Gln-678–Ala-869 form the ATP-grasp 2 domain. ATP is bound by residues Arg-714, His-753, Leu-755, Glu-760, Gly-785, Val-786, His-787, Ser-788, Gln-828, and Glu-840. Mg(2+)-binding residues include Gln-828, Glu-840, and Asn-842. Positions 828, 840, and 842 each coordinate Mn(2+). In terms of domain architecture, MGS-like spans Glu-936 to Gln-1076. Residues Glu-936 to Gln-1076 form an allosteric domain region.

The protein belongs to the CarB family. In terms of assembly, composed of two chains; the small (or glutamine) chain promotes the hydrolysis of glutamine to ammonia, which is used by the large (or ammonia) chain to synthesize carbamoyl phosphate. Tetramer of heterodimers (alpha,beta)4. The cofactor is Mg(2+). Mn(2+) is required as a cofactor.

The catalysed reaction is hydrogencarbonate + L-glutamine + 2 ATP + H2O = carbamoyl phosphate + L-glutamate + 2 ADP + phosphate + 2 H(+). It catalyses the reaction hydrogencarbonate + NH4(+) + 2 ATP = carbamoyl phosphate + 2 ADP + phosphate + 2 H(+). It functions in the pathway amino-acid biosynthesis; L-arginine biosynthesis; carbamoyl phosphate from bicarbonate: step 1/1. The protein operates within pyrimidine metabolism; UMP biosynthesis via de novo pathway; (S)-dihydroorotate from bicarbonate: step 1/3. In terms of biological role, large subunit of the glutamine-dependent carbamoyl phosphate synthetase (CPSase). CPSase catalyzes the formation of carbamoyl phosphate from the ammonia moiety of glutamine, carbonate, and phosphate donated by ATP, constituting the first step of 2 biosynthetic pathways, one leading to arginine and/or urea and the other to pyrimidine nucleotides. The large subunit (synthetase) binds the substrates ammonia (free or transferred from glutamine from the small subunit), hydrogencarbonate and ATP and carries out an ATP-coupled ligase reaction, activating hydrogencarbonate by forming carboxy phosphate which reacts with ammonia to form carbamoyl phosphate. The sequence is that of Carbamoyl phosphate synthase large chain from Halomonas eurihalina.